The following is a 1042-amino-acid chain: Starch synthase 3, chloroplastic/amyloplastic (1042 aa).

The transit peptide at 1 to 44 (MISYFLNQDFSRKKQGRMAASGPKSSGPRGFGRRTTVGSAQKRT) directs the protein to the chloroplast. The interval 1–63 (MISYFLNQDF…NATSTATNEV (63 aa)) is disordered. Polar residues predominate over residues 54-63 (NATSTATNEV). Residues 247–302 (ENFLLEEKLREQEKLAKEEAERERQKEEKRRIEAQKAAIEADRAQAKAETQKRREL) adopt a coiled-coil conformation. K608 is an ADP-alpha-D-glucose binding site.

The protein belongs to the glycosyltransferase 1 family. Bacterial/plant glycogen synthase subfamily. In terms of tissue distribution, expressed in leaves and flowers.

It is found in the plastid. It localises to the chloroplast. The protein localises to the amyloplast. The catalysed reaction is [(1-&gt;4)-alpha-D-glucosyl](n) + ADP-alpha-D-glucose = [(1-&gt;4)-alpha-D-glucosyl](n+1) + ADP + H(+). The protein operates within glycan biosynthesis; starch biosynthesis. In terms of biological role, involved in the synthesis of glycan chains within amylopectin in leaves. May play a regulatory role in the control of starch accumulation in plastids. The chain is Starch synthase 3, chloroplastic/amyloplastic (SS3) from Arabidopsis thaliana (Mouse-ear cress).